We begin with the raw amino-acid sequence, 216 residues long: MSEEAYEETQESSQSPRPVPKLNERILSTLSRRSVAAHPWHDLEIGPEAPLVFNVVVEITKGSKVKYELDKKTGLIKVDRILYSSVVYPHNYGFIPRTLCEDNDPLDVLVLMQEPVLPGCFLRARAIGLMPMIDQGEKDDKIIAVCADDPEYKHFTDIKQLAPHRLQEIRRFFEDYKKNENKKVAVNDFLPSESAHEAIQYSMDLYAEYILHTLRR.

Residues 1 to 10 (MSEEAYEETQ) show a composition bias toward acidic residues. The tract at residues 1 to 21 (MSEEAYEETQESSQSPRPVPK) is disordered. Substrate contacts are provided by Lys-66 and Arg-80. Tyr-88 functions as the Proton donor in the catalytic mechanism. Tyr-92 contributes to the substrate binding site. The Mg(2+) site is built by Asp-102, Asp-107, and Asp-139. Tyr-176 lines the substrate pocket.

The protein belongs to the PPase family. The cofactor is Mg(2+). Expressed preferentially in stamen, pollen and flower, and at a low level in lateral roots and root elongation zones.

It is found in the cytoplasm. It catalyses the reaction diphosphate + H2O = 2 phosphate + H(+). This chain is Soluble inorganic pyrophosphatase 3, found in Arabidopsis thaliana (Mouse-ear cress).